The sequence spans 315 residues: MEGDQETNVYTLVARKPSFDLPTACPNCLPAYIYLKLAQLPFELAFNSTFPDSDELPYFESDTYVAYNNEDGGVIEKLKKDGIVNLDSQLQSLSDYLSLKALIVSWLEEALTYEIWVGTEGISTSKIYYSDLPWVISKVLFYKQTYLAKNRLGITKENAEQREKQIYKRASEAYEALSTRLGEQKFLFEDRPSSLDAFLLSHILFIIQALPVTSVLRCKLLEHSNLVRYAEKLKSEFLEASSSSPSPPLHSFPSSFPRKSSKPKSKPKVEKTEEEKKFKKRARFFLAAQFLAVVIYVSVMGGGSSDELEYEDEDD.

The residue at position 1 (M1) is an N-acetylmethionine. A coiled-coil region spans residues 157–181 (ENAEQREKQIYKRASEAYEALSTRL). A helical transmembrane segment spans residues 195–215 (LDAFLLSHILFIIQALPVTSV). Residues 240–277 (ASSSSPSPPLHSFPSSFPRKSSKPKSKPKVEKTEEEKK) form a disordered region. Over residues 267-277 (PKVEKTEEEKK) the composition is skewed to basic and acidic residues. A helical membrane pass occupies residues 284-304 (FFLAAQFLAVVIYVSVMGGGS).

It belongs to the metaxin family. As to quaternary structure, part of a high molecular weight complex that is distinct from the TOM complex. Interacts with a variety of mitochondrial precursor proteins. Expressed in roots, young cotyledons, flowers and leaves.

It is found in the mitochondrion inner membrane. Its subcellular location is the mitochondrion outer membrane. In terms of biological role, involved in transport of proteins into the mitochondrion. The protein is Mitochondrial outer membrane import complex protein METAXIN (MTX1) of Arabidopsis thaliana (Mouse-ear cress).